The primary structure comprises 86 residues: Neurotoxin LmNaTx17 (86 aa).

The signal sequence occupies residues 1 to 18 (MKILFVIVLAAFFIGVHC). One can recognise an LCN-type CS-alpha/beta domain in the interval 19-85 (KHGYPVQYSG…TWDYKTGKCR (67 aa)). 4 cysteine pairs are disulfide-bonded: C33-C84, C37-C58, C44-C65, and C48-C67.

This sequence belongs to the long (4 C-C) scorpion toxin superfamily. Sodium channel inhibitor family. Beta subfamily. In terms of tissue distribution, expressed by the venom gland.

The protein localises to the secreted. Functionally, binds voltage-independently at site-4 of sodium channels (Nav) and shift the voltage of activation toward more negative potentials thereby affecting sodium channel activation and promoting spontaneous and repetitive firing. The sequence is that of Neurotoxin LmNaTx17 from Lychas mucronatus (Chinese swimming scorpion).